Here is a 646-residue protein sequence, read N- to C-terminus: Elongation factor 4 (646 aa).

The region spanning 42 to 227 is the tr-type G domain; the sequence is AQIRNFCIIA…EVVRRVPHPQ (186 aa). Residues 54-59 and 174-177 each bind GTP; these read DHGKST and NKID.

The protein belongs to the TRAFAC class translation factor GTPase superfamily. Classic translation factor GTPase family. LepA subfamily.

The protein resides in the cell membrane. It carries out the reaction GTP + H2O = GDP + phosphate + H(+). Its function is as follows. Required for accurate and efficient protein synthesis under certain stress conditions. May act as a fidelity factor of the translation reaction, by catalyzing a one-codon backward translocation of tRNAs on improperly translocated ribosomes. Back-translocation proceeds from a post-translocation (POST) complex to a pre-translocation (PRE) complex, thus giving elongation factor G a second chance to translocate the tRNAs correctly. Binds to ribosomes in a GTP-dependent manner. The sequence is that of Elongation factor 4 from Mycobacterium leprae (strain Br4923).